A 388-amino-acid chain; its full sequence is F-box protein ETP2 (388 aa).

The F-box domain maps to 2-48 (KTIQEQLPNDLVEEILCRVPATSLRRLRSTCKAWNRLFKGDRILASK).

Interacts with EIN2 (via C-terminus).

Functionally, negative regulator of EIN2 protein stability. This Arabidopsis thaliana (Mouse-ear cress) protein is F-box protein ETP2.